The chain runs to 580 residues: MTKLFNDPARFTEDMLVGFLDANSRYVVGVPGGVVRAQTTRPGKVAVVIGGGSGHYPAFCGTVGPGFADGAVVGNIFTSPSAEEAASVARAAHSDAGVLLTTGNYAGDVMNFNLAVDQLRSEGIEAQYFAVTDDVASAERGQEAKRRGIAGDFTVFKCASAAAEEGLDLAGVVRVAEAANAATRTLGVAFDGCTLPGADHPLFTVPEGHMGLGLGIHGEPGVSEEKMPTAAGLAATLVDGVLGDRPDAPEKRIAVILNGLGRTKYEELFVVWGEVSRLLRDRGYTIVEPEVGELVTSLDMAGCSLTVMWLDEELERYWAAPADTPAYKKGAAQQHVSGERRSEATARSASSGPKLAELSDEDGRAGARLVARAFDAMAEALADAEEELGRIDAVAGDGDHGRGMVKGSSAAREAAASALSEGAGQGSVLNAAGKAWAAKAGGTSGVLWGALLTALGARLGDTGRPDSSVIAAGVRDAYDALIRLGGAAPGDKTMLDAMLPFTEELERRVAQDESWQSAWRAAADVATEAARATADLRPKIGRARPLAERSVGTPDAGATSLALCARTVADCVTLSTQGEN.

A DhaK domain is found at 7 to 327 (DPARFTEDML…WAAPADTPAY (321 aa)). The Tele-hemiaminal-histidine intermediate role is filled by H217. The interval 329 to 360 (KGAAQQHVSGERRSEATARSASSGPKLAELSD) is disordered. The 203-residue stretch at 368–570 (RLVARAFDAM…LALCARTVAD (203 aa)) folds into the DhaL domain. Residues 397–403 (DGDHGRG), 443–444 (TS), G485, R542, and 555–557 (DAG) contribute to the ATP site.

The catalysed reaction is D-erythrulose + ATP = D-erythrulose 4-phosphate + ADP + H(+). It participates in carbohydrate metabolism; erythritol degradation. It functions in the pathway carbohydrate metabolism; D-threitol degradation. Functionally, catalyzes the phosphorylation of D-erythrulose to D-erythrulose-4P. Involved in the degradation pathways of erythritol and D-threitol, that allow M.smegmatis to grow on these compounds as the sole carbon source. This chain is D-erythrulose kinase, found in Mycolicibacterium smegmatis (strain ATCC 700084 / mc(2)155) (Mycobacterium smegmatis).